Reading from the N-terminus, the 341-residue chain is Formimidoylglutamase (341 aa).

The Mn(2+) site is built by H133, D162, H164, D166, C253, and D255.

It belongs to the arginase family. It depends on Mn(2+) as a cofactor.

The catalysed reaction is N-formimidoyl-L-glutamate + H2O = formamide + L-glutamate. It participates in amino-acid degradation; L-histidine degradation into L-glutamate; L-glutamate from N-formimidoyl-L-glutamate (hydrolase route): step 1/1. In terms of biological role, catalyzes the conversion of N-formimidoyl-L-glutamate to L-glutamate and formamide. The chain is Formimidoylglutamase from Aromatoleum aromaticum (strain DSM 19018 / LMG 30748 / EbN1) (Azoarcus sp. (strain EbN1)).